Here is a 694-residue protein sequence, read N- to C-terminus: TBC1 domain family member 14 (694 aa).

S92 carries the phosphoserine modification. Basic and acidic residues predominate over residues 272-289 (TAQKDSKKTQKEYEDKAG). The segment at 272–305 (TAQKDSKKTQKEYEDKAGRPSRPPSPKQNVRKNL) is disordered. S296 is subject to Phosphoserine. The 211-residue stretch at 402–612 (GIPPSVRGKV…RIWDVFCRDG (211 aa)) folds into the Rab-GAP TBC domain.

As to quaternary structure, interacts with ULK1. May interact with RAB11A and RAB11B, but does not exhibit any GTPase-activating activity toward these proteins. Interacts with TRAPPC8.

Its subcellular location is the golgi apparatus. It is found in the cis-Golgi network. The protein resides in the trans-Golgi network. Plays a role in the regulation of starvation-induced autophagosome formation. Together with the TRAPPIII complex, regulates a constitutive trafficking step from peripheral recycling endosomes to the early Golgi, maintaining the cycling pool of ATG9 required for initiation of autophagy. In Mus musculus (Mouse), this protein is TBC1 domain family member 14 (Tbc1d14).